Reading from the N-terminus, the 471-residue chain is MNPNQKIICISATGMTLSVVSLLIGIANLGLNIGLHYKVGDTPDVNTPNVNGTNSTTTTIINNNTQNNFTNITNIIHNKNEERTFLNLTKPLCEVNSWHILSKDNAIRIGEEAHILVTREPYLSCDPQGCRMFALSQGTTLRGRHANGTIHDRSPFRALVSWEMGQAPSPYNAKIECIGWSSTSCHDGISRMSICMSGPNNNASAVVWYGGRPVTEIPSWAGNILRTQESECVCHKGICPVVMTDGPANNKAATKIIYFKEGKIQKIEELTGNAQHIEECSCYGAKEVIKCICRDNWKGANRPVITIDPEMMTHTSKYLCSKILTDTSRPNDPTNGNCDAPITGGNPDPGVKGFAFLDGENSWLGRTISKDSRSGYEMLKVPNAETNTQSGPITHQVIVNNQNWSGYSGAFIDYWANKECFNPCFYVELIRGRPKESSVLWTSNSIVALCGSKERLGSWSWHDGAEIIYFK.

At M1 to K6 the chain is on the intravirion side. The helical transmembrane segment at I7 to A27 threads the bilayer. Positions S11–I33 are involved in apical transport and lipid raft association. The Virion surface portion of the chain corresponds to N28 to K471. Residues H36 to T89 form a hypervariable stalk region region. 6 N-linked (GlcNAc...) asparagine; by host glycosylation sites follow: N51, N54, N63, N68, N71, and N87. Positions L92–K471 are head of neuraminidase. 8 cysteine pairs are disulfide-bonded: C93-C420, C125-C130, C185-C232, C234-C239, C280-C293, C282-C291, C320-C338, and C424-C450. R119 lines the substrate pocket. Residue N147 is glycosylated (N-linked (GlcNAc...) asparagine; by host). The active-site Proton donor/acceptor is D152. R153 serves as a coordination point for substrate. N202 is a glycosylation site (N-linked (GlcNAc...) asparagine; by host). Substrate is bound at residue E278–E279. R294 contacts substrate. Residues D295, G299, and D326 each coordinate Ca(2+). R373 contacts substrate. A glycan (N-linked (GlcNAc...) asparagine; by host) is linked at N403. Catalysis depends on Y407, which acts as the Nucleophile.

It belongs to the glycosyl hydrolase 34 family. As to quaternary structure, homotetramer. It depends on Ca(2+) as a cofactor. N-glycosylated.

Its subcellular location is the virion membrane. It localises to the host apical cell membrane. It catalyses the reaction Hydrolysis of alpha-(2-&gt;3)-, alpha-(2-&gt;6)-, alpha-(2-&gt;8)- glycosidic linkages of terminal sialic acid residues in oligosaccharides, glycoproteins, glycolipids, colominic acid and synthetic substrates.. Its activity is regulated as follows. Inhibited by the neuraminidase inhibitors zanamivir (Relenza) and oseltamivir (Tamiflu). These drugs interfere with the release of progeny virus from infected cells and are effective against all influenza strains. Resistance to neuraminidase inhibitors is quite rare. Catalyzes the removal of terminal sialic acid residues from viral and cellular glycoconjugates. Cleaves off the terminal sialic acids on the glycosylated HA during virus budding to facilitate virus release. Additionally helps virus spread through the circulation by further removing sialic acids from the cell surface. These cleavages prevent self-aggregation and ensure the efficient spread of the progeny virus from cell to cell. Otherwise, infection would be limited to one round of replication. Described as a receptor-destroying enzyme because it cleaves a terminal sialic acid from the cellular receptors. May facilitate viral invasion of the upper airways by cleaving the sialic acid moieties on the mucin of the airway epithelial cells. Likely to plays a role in the budding process through its association with lipid rafts during intracellular transport. May additionally display a raft-association independent effect on budding. Plays a role in the determination of host range restriction on replication and virulence. Sialidase activity in late endosome/lysosome traffic seems to enhance virus replication. The chain is Neuraminidase from Influenza A virus (strain A/Gull/Maryland/704/1977 H13N6).